Here is a 391-residue protein sequence, read N- to C-terminus: Polyketide synthase 5 (391 aa).

The active site involves Cys164.

It belongs to the thiolase-like superfamily. Chalcone/stilbene synthases family. Homodimer. In terms of tissue distribution, expressed in fruits.

It carries out the reaction (E)-4-coumaroyl-CoA + 3 malonyl-CoA + 3 H(+) = 2',4,4',6'-tetrahydroxychalcone + 3 CO2 + 4 CoA. The protein operates within secondary metabolite biosynthesis; flavonoid biosynthesis. Polyketide synthase producing naringenin chalcone. Can use p-coumaryl-CoA as substrate. This chain is Polyketide synthase 5 (PKS5), found in Rubus idaeus (Raspberry).